The primary structure comprises 362 residues: Golgi-resident adenosine 3',5'-bisphosphate 3'-phosphatase (362 aa).

Position 1 is an N-acetylmethionine (methionine 1). Over 1–12 (MAPMGIRLSPLG) the chain is Cytoplasmic. A helical transmembrane segment spans residues 13 to 33 (VAVFCLLGLGVLYHLYSGFLA). Topologically, residues 34-362 (GRFSLFGLGG…LPDLEKTGHK (329 aa)) are lumenal. The segment at 88–109 (RESNVLHEKSKGKTREGADDKM) is disordered. The Proton acceptor role is filled by aspartate 113. 4 residues coordinate Mg(2+): glutamate 136, aspartate 177, leucine 179, and aspartate 180. The Proton acceptor role is filled by threonine 182. AMP contacts are provided by serine 245 and histidine 248. The N-linked (GlcNAc...) asparagine glycan is linked to asparagine 262. Residues glycine 271 and lysine 275 each coordinate AMP. Mg(2+) is bound at residue aspartate 303.

Belongs to the inositol monophosphatase superfamily. Mg(2+) serves as cofactor. In terms of processing, contains N-linked glycan resistant to endoglycosydase H.

It is found in the golgi apparatus. The protein localises to the trans-Golgi network membrane. It catalyses the reaction adenosine 3',5'-bisphosphate + H2O = AMP + phosphate. Its pathway is sulfur metabolism. Strongly inhibited by lithium. Its function is as follows. Exhibits 3'-nucleotidase activity toward adenosine 3',5'-bisphosphate (PAP), namely hydrolyzes adenosine 3',5'-bisphosphate into adenosine 5'-monophosphate (AMP) and a phosphate. May play a role in the formation of skeletal elements derived through endochondral ossification, possibly by clearing adenosine 3',5'-bisphosphate produced by Golgi sulfotransferases during glycosaminoglycan sulfation. Has no activity toward 3'-phosphoadenosine 5'-phosphosulfate (PAPS) or inositol phosphate (IP) substrates including I(1)P, I(1,4)P2, I(1,3,4)P3, I(1,4,5)P3 and I(1,3,4,5)P4. This chain is Golgi-resident adenosine 3',5'-bisphosphate 3'-phosphatase (BPNT2), found in Bos taurus (Bovine).